We begin with the raw amino-acid sequence, 119 residues long: NADH dehydrogenase [ubiquinone] 1 subunit C2 (119 aa).

A helical membrane pass occupies residues 56–75; that stretch reads GLHRQLLYITAFFFAGYYLV.

This sequence belongs to the complex I NDUFC2 subunit family. In terms of assembly, complex I is composed of 45 different subunits. Interacts with TMEM242.

The protein localises to the mitochondrion inner membrane. Functionally, accessory subunit of the mitochondrial membrane respiratory chain NADH dehydrogenase (Complex I), that is believed not to be involved in catalysis but required for the complex assembly. Complex I functions in the transfer of electrons from NADH to the respiratory chain. The immediate electron acceptor for the enzyme is believed to be ubiquinone. This chain is NADH dehydrogenase [ubiquinone] 1 subunit C2, found in Pan troglodytes (Chimpanzee).